The chain runs to 149 residues: Putative pre-16S rRNA nuclease (149 aa).

The protein belongs to the YqgF nuclease family.

The protein localises to the cytoplasm. In terms of biological role, could be a nuclease involved in processing of the 5'-end of pre-16S rRNA. This chain is Putative pre-16S rRNA nuclease, found in Heliobacterium modesticaldum (strain ATCC 51547 / Ice1).